A 286-amino-acid chain; its full sequence is Diaminopimelate epimerase (286 aa).

2 residues coordinate substrate: Asn-12 and Asn-67. Catalysis depends on Cys-76, which acts as the Proton donor. Residues 77–78, Asn-165, Asn-198, and 216–217 each bind substrate; these read GN and ER. The active-site Proton acceptor is the Cys-225. A substrate-binding site is contributed by 226 to 227; sequence GT.

This sequence belongs to the diaminopimelate epimerase family. In terms of assembly, homodimer.

Its subcellular location is the cytoplasm. The enzyme catalyses (2S,6S)-2,6-diaminopimelate = meso-2,6-diaminopimelate. It functions in the pathway amino-acid biosynthesis; L-lysine biosynthesis via DAP pathway; DL-2,6-diaminopimelate from LL-2,6-diaminopimelate: step 1/1. In terms of biological role, catalyzes the stereoinversion of LL-2,6-diaminopimelate (L,L-DAP) to meso-diaminopimelate (meso-DAP), a precursor of L-lysine. The protein is Diaminopimelate epimerase of Methanothermobacter thermautotrophicus (strain ATCC 29096 / DSM 1053 / JCM 10044 / NBRC 100330 / Delta H) (Methanobacterium thermoautotrophicum).